The following is a 688-amino-acid chain: Zinc finger protein 770 (688 aa).

A Glycyl lysine isopeptide (Lys-Gly) (interchain with G-Cter in SUMO2) cross-link involves residue K11. 3 consecutive C2H2-type zinc fingers follow at residues 27–49, 55–77, and 81–103; these read YVCNICFKHFETPSKLARHYLIH, FECDVCHKTFRQLVHLERHQLTH, and FKCSICQRHFKNLKTFVKHQQLH. Glycyl lysine isopeptide (Lys-Gly) (interchain with G-Cter in SUMO2) cross-links involve residues K112, K121, and K146. 3 consecutive C2H2-type zinc fingers follow at residues 160 to 182, 188 to 210, and 216 to 238; these read HACTICGKMFPSQSKLDRHVLIH, FKCVLCTKSFRQSTHLKIHQLTH, and FQCCFCQKGFKIQSKLLKHKQIH. Residue K262 forms a Glycyl lysine isopeptide (Lys-Gly) (interchain with G-Cter in SUMO2) linkage. The segment at 294–318 adopts a C2H2-type 7; degenerate zinc-finger fold; that stretch reads FQCPKCEKCFESEQILNEHSCFPAR. Residues K420 and K437 each participate in a glycyl lysine isopeptide (Lys-Gly) (interchain with G-Cter in SUMO2) cross-link. 4 consecutive C2H2-type zinc fingers follow at residues 475–497, 503–525, 623–645, and 651–673; these read CPCDKCEKVFPSISKLKRHYLIH, FGCNICGKSFRQSAHLKRHEQTH, YRCSVCAKSFRSPSKLERHYLIH, and FECSVCGKTFRQAPHWKRHQLTH. Residue K681 forms a Glycyl lysine isopeptide (Lys-Gly) (interchain with G-Cter in SUMO2) linkage.

It belongs to the krueppel C2H2-type zinc-finger protein family.

Its subcellular location is the nucleus. In terms of biological role, may be involved in transcriptional regulation. The polypeptide is Zinc finger protein 770 (ZNF770) (Pongo abelii (Sumatran orangutan)).